Consider the following 494-residue polypeptide: Glutamate--tRNA ligase (494 aa).

Residues 10-20 (PSPTGDPHVGT) carry the 'HIGH' region motif. Zn(2+) is bound by residues Cys-107, Cys-109, Cys-134, and His-136. The 'KMSKS' region motif lies at 251-255 (KLSKR). Lys-254 contributes to the ATP binding site.

The protein belongs to the class-I aminoacyl-tRNA synthetase family. Glutamate--tRNA ligase type 1 subfamily. In terms of assembly, monomer. It depends on Zn(2+) as a cofactor.

The protein localises to the cytoplasm. It catalyses the reaction tRNA(Glu) + L-glutamate + ATP = L-glutamyl-tRNA(Glu) + AMP + diphosphate. Catalyzes the attachment of glutamate to tRNA(Glu) in a two-step reaction: glutamate is first activated by ATP to form Glu-AMP and then transferred to the acceptor end of tRNA(Glu). The chain is Glutamate--tRNA ligase from Pseudomonas paraeruginosa (strain DSM 24068 / PA7) (Pseudomonas aeruginosa (strain PA7)).